Reading from the N-terminus, the 745-residue chain is Elongation factor G, mitochondrial (745 aa).

Residues 1-15 constitute a mitochondrion transit peptide; sequence MSLITRLLTASSPLR. A tr-type G domain is found at 40-317; that stretch reads DKIRNIGISA…AVLEYLPNPG (278 aa). Residues 49–56, 116–120, and 170–173 each bind GTP; these read AHIDSGKT, DTPGH, and NKLD.

It belongs to the TRAFAC class translation factor GTPase superfamily. Classic translation factor GTPase family. EF-G/EF-2 subfamily.

It is found in the mitochondrion. It functions in the pathway protein biosynthesis; polypeptide chain elongation. Functionally, mitochondrial GTPase that catalyzes the GTP-dependent ribosomal translocation step during translation elongation. During this step, the ribosome changes from the pre-translocational (PRE) to the post-translocational (POST) state as the newly formed A-site-bound peptidyl-tRNA and P-site-bound deacylated tRNA move to the P and E sites, respectively. Catalyzes the coordinated movement of the two tRNA molecules, the mRNA and conformational changes in the ribosome. Essential during development as it acts as a retrograde signal from mitochondria to the nucleus to slow down cell proliferation if mitochondrial energy output is low. This is Elongation factor G, mitochondrial (ico) from Drosophila ananassae (Fruit fly).